The following is a 186-amino-acid chain: Elongation factor P (186 aa).

Belongs to the elongation factor P family.

The protein resides in the cytoplasm. It participates in protein biosynthesis; polypeptide chain elongation. In terms of biological role, involved in peptide bond synthesis. Stimulates efficient translation and peptide-bond synthesis on native or reconstituted 70S ribosomes in vitro. Probably functions indirectly by altering the affinity of the ribosome for aminoacyl-tRNA, thus increasing their reactivity as acceptors for peptidyl transferase. The chain is Elongation factor P from Coprothermobacter proteolyticus (strain ATCC 35245 / DSM 5265 / OCM 4 / BT).